A 189-amino-acid chain; its full sequence is Dual specificity phosphatase 21 (189 aa).

Residues 20-161 (GLSQITASLF…LIHYEFKLFS (142 aa)) form the Tyrosine-protein phosphatase domain. The tract at residues 43 to 128 (SNNHITTIIN…YLMKYHNMTL (86 aa)) is sufficient for mitochondrial localization. Cysteine 105 (phosphocysteine intermediate) is an active-site residue.

It belongs to the protein-tyrosine phosphatase family. Non-receptor class dual specificity subfamily. Microtubule inner protein component of sperm flagellar doublet microtubules. In terms of tissue distribution, selectively expressed in testis.

The protein resides in the cytoplasm. Its subcellular location is the nucleus. It localises to the mitochondrion inner membrane. The protein localises to the cytoskeleton. It is found in the flagellum axoneme. The catalysed reaction is O-phospho-L-tyrosyl-[protein] + H2O = L-tyrosyl-[protein] + phosphate. It catalyses the reaction O-phospho-L-seryl-[protein] + H2O = L-seryl-[protein] + phosphate. The enzyme catalyses O-phospho-L-threonyl-[protein] + H2O = L-threonyl-[protein] + phosphate. Its function is as follows. Protein phosphatase component of the sperm flagellar doublet microtubules. May act as a regulator of sperm motility by mediating dephosphorylation of sperm doublet microtubule proteins. Can dephosphorylate single and diphosphorylated synthetic MAPK peptides, with preference for the phosphotyrosine and diphosphorylated forms over phosphothreonine. This chain is Dual specificity phosphatase 21, found in Mus musculus (Mouse).